The sequence spans 940 residues: Lysine-specific demethylase 7A (940 aa).

Residues 37–88 (PVYCVCRQPYDVNRFMIECDVCKDWFHGSCVGVEEHHAVDIDLYHCPDCAAL) form a PHD-type zinc finger. Residues 97–114 (RRNWHRHDYTEVDDGSKP) form a linker region. The 157-residue stretch at 230-386 (FSDTKMSELV…MQLRCYEMEK (157 aa)) folds into the JmjC domain. A substrate-binding site is contributed by Thr-279. Positions 282 and 284 each coordinate Fe cation. Position 299 (Lys-299) interacts with substrate. His-354 contacts Fe cation. Disordered stretches follow at residues 483 to 509 (VKSQ…HSRR), 599 to 670 (LYTA…PDCT), 710 to 729 (SQKP…TSTS), 818 to 854 (NAQD…SSSI), and 876 to 920 (SPER…MATA). The residue at position 604 (Ser-604) is a Phosphoserine. The span at 613-623 (TQNANMKTEQS) shows a compositional bias: polar residues. Residues 714-724 (SRQEIPVKREC) are compositionally biased toward basic and acidic residues.

The protein belongs to the JHDM1 histone demethylase family. JHDM1D subfamily. The cofactor is Fe(2+).

It localises to the nucleus. The catalysed reaction is N(6),N(6)-dimethyl-L-lysyl(9)-[histone H3] + 2 2-oxoglutarate + 2 O2 = L-lysyl(9)-[histone H3] + 2 formaldehyde + 2 succinate + 2 CO2. It catalyses the reaction N(6),N(6)-dimethyl-L-lysyl(27)-[histone H3] + 2 2-oxoglutarate + 2 O2 = L-lysyl(27)-[histone H3] + 2 formaldehyde + 2 succinate + 2 CO2. The enzyme catalyses N(6),N(6)-dimethyl-L-lysyl(36)-[histone H3] + 2-oxoglutarate + O2 = N(6)-methyl-L-lysyl(36)-[histone H3] + formaldehyde + succinate + CO2. It carries out the reaction N(6)-methyl-L-lysyl(20)-[histone H4] + 2-oxoglutarate + O2 = L-lysyl(20)-[histone H4] + formaldehyde + succinate + CO2. Its function is as follows. Histone demethylase required for brain development. Specifically demethylates dimethylated 'Lys-9', 'Lys-27' and 'Lys-36' (H3K9me2, H3K27me2, H3K36me2, respectively) of histone H3 and monomethylated histone H4 'Lys-20' residue (H4K20Me1), thereby playing a central role in histone code. Specifically binds trimethylated 'Lys-4' of histone H3 (H3K4me3), affecting histone demethylase specificity: in presence of H3K4me3, it has no demethylase activity toward H3K9me2, while it has high activity toward H3K27me2. Demethylates H3K9me2 in absence of H3K4me3. Has activity toward H4K20Me1 only when nucleosome is used as a substrate and when not histone octamer is used as substrate. In Mus musculus (Mouse), this protein is Lysine-specific demethylase 7A (Kdm7a).